Consider the following 180-residue polypeptide: Putative manganese efflux pump MntP (180 aa).

The next 6 helical transmembrane spans lie at 6-26 (LFAL…GIGI), 34-54 (IALI…LGWY), 67-87 (ASIA…WDTI), 103-123 (GGLL…GFTL), 130-150 (LVLA…AGLT), and 159-179 (IGER…VKLF).

Belongs to the MntP (TC 9.B.29) family.

It is found in the cell membrane. Its function is as follows. Probably functions as a manganese efflux pump. The protein is Putative manganese efflux pump MntP of Desulforamulus reducens (strain ATCC BAA-1160 / DSM 100696 / MI-1) (Desulfotomaculum reducens).